The primary structure comprises 184 residues: Probable RNA 2'-phosphotransferase (184 aa).

This sequence belongs to the KptA/TPT1 family.

Its function is as follows. Removes the 2'-phosphate from RNA via an intermediate in which the phosphate is ADP-ribosylated by NAD followed by a presumed transesterification to release the RNA and generate ADP-ribose 1''-2''-cyclic phosphate (APPR&gt;P). May function as an ADP-ribosylase. This chain is Probable RNA 2'-phosphotransferase, found in Rhodopirellula baltica (strain DSM 10527 / NCIMB 13988 / SH1).